The chain runs to 383 residues: Cytochrome b (383 aa).

Helical transmembrane passes span 32 to 52 (VGSL…FLAM), 76 to 98 (WLMR…LHMG), 113 to 133 (VWSM…MGYC), and 179 to 199 (FFAL…MHFM). Heme b-binding residues include H82 and H96. Heme b-binding residues include H183 and H197. H202 contacts a ubiquinone. Transmembrane regions (helical) follow at residues 225–245 (FVFK…LFVF), 289–309 (LGGV…PMTD), 321–341 (LSKL…NMGQ), and 348–368 (FIEL…MLVP).

Belongs to the cytochrome b family. In terms of assembly, fungal cytochrome b-c1 complex contains 10 subunits; 3 respiratory subunits, 2 core proteins and 5 low-molecular weight proteins. Cytochrome b-c1 complex is a homodimer. The cofactor is heme b.

The protein localises to the mitochondrion inner membrane. Functionally, component of the ubiquinol-cytochrome c reductase complex (complex III or cytochrome b-c1 complex) that is part of the mitochondrial respiratory chain. The b-c1 complex mediates electron transfer from ubiquinol to cytochrome c. Contributes to the generation of a proton gradient across the mitochondrial membrane that is then used for ATP synthesis. This is Cytochrome b (COB) from Debaryomyces hansenii (strain ATCC 36239 / CBS 767 / BCRC 21394 / JCM 1990 / NBRC 0083 / IGC 2968) (Yeast).